Consider the following 294-residue polypeptide: Pantothenate synthetase 3 (294 aa).

ATP is bound at residue 31 to 38 (MGALHEGH). Histidine 38 (proton donor) is an active-site residue. Residue glutamine 62 coordinates (R)-pantoate. Glutamine 62 contributes to the beta-alanine binding site. 154–157 (GEKD) is an ATP binding site. Residue glutamine 160 participates in (R)-pantoate binding. Position 191-194 (191-194 (LSSR)) interacts with ATP.

It belongs to the pantothenate synthetase family. Homodimer.

The protein resides in the cytoplasm. It carries out the reaction (R)-pantoate + beta-alanine + ATP = (R)-pantothenate + AMP + diphosphate + H(+). It participates in cofactor biosynthesis; (R)-pantothenate biosynthesis; (R)-pantothenate from (R)-pantoate and beta-alanine: step 1/1. Functionally, catalyzes the condensation of pantoate with beta-alanine in an ATP-dependent reaction via a pantoyl-adenylate intermediate. In Frankia alni (strain DSM 45986 / CECT 9034 / ACN14a), this protein is Pantothenate synthetase 3.